Reading from the N-terminus, the 296-residue chain is NAD kinase (296 aa).

Aspartate 72 serves as the catalytic Proton acceptor. NAD(+)-binding positions include 72-73 (DG), 146-147 (ND), arginine 157, lysine 174, aspartate 176, 187-192 (TAYALS), and glutamine 247.

It belongs to the NAD kinase family. It depends on a divalent metal cation as a cofactor.

It is found in the cytoplasm. It carries out the reaction NAD(+) + ATP = ADP + NADP(+) + H(+). Its function is as follows. Involved in the regulation of the intracellular balance of NAD and NADP, and is a key enzyme in the biosynthesis of NADP. Catalyzes specifically the phosphorylation on 2'-hydroxyl of the adenosine moiety of NAD to yield NADP. The chain is NAD kinase from Pseudomonas fluorescens (strain SBW25).